A 274-amino-acid polypeptide reads, in one-letter code: 2,3,4,5-tetrahydropyridine-2,6-dicarboxylate N-succinyltransferase (274 aa).

Residues R104 and D141 each contribute to the substrate site.

This sequence belongs to the transferase hexapeptide repeat family. In terms of assembly, homotrimer.

It localises to the cytoplasm. The catalysed reaction is (S)-2,3,4,5-tetrahydrodipicolinate + succinyl-CoA + H2O = (S)-2-succinylamino-6-oxoheptanedioate + CoA. It functions in the pathway amino-acid biosynthesis; L-lysine biosynthesis via DAP pathway; LL-2,6-diaminopimelate from (S)-tetrahydrodipicolinate (succinylase route): step 1/3. The chain is 2,3,4,5-tetrahydropyridine-2,6-dicarboxylate N-succinyltransferase from Shewanella sp. (strain ANA-3).